The following is a 316-amino-acid chain: Protein U25 (316 aa).

Belongs to the herpesviridae US22 family.

The polypeptide is Protein U25 (U25) (Homo sapiens (Human)).